A 382-amino-acid chain; its full sequence is Galactokinase (382 aa).

Position 34-37 (E34–D37) interacts with substrate. Position 124-130 (G124–S130) interacts with ATP. Residues S130 and E162 each coordinate Mg(2+). Catalysis depends on D174, which acts as the Proton acceptor. Y223 lines the substrate pocket.

This sequence belongs to the GHMP kinase family. GalK subfamily.

Its subcellular location is the cytoplasm. The catalysed reaction is alpha-D-galactose + ATP = alpha-D-galactose 1-phosphate + ADP + H(+). It functions in the pathway carbohydrate metabolism; galactose metabolism. Functionally, catalyzes the transfer of the gamma-phosphate of ATP to D-galactose to form alpha-D-galactose-1-phosphate (Gal-1-P). The protein is Galactokinase of Salmonella heidelberg (strain SL476).